A 549-amino-acid chain; its full sequence is Glucose-6-phosphate isomerase (549 aa).

The active-site Proton donor is the E355. Catalysis depends on residues H386 and K514.

It belongs to the GPI family.

Its subcellular location is the cytoplasm. The enzyme catalyses alpha-D-glucose 6-phosphate = beta-D-fructose 6-phosphate. Its pathway is carbohydrate biosynthesis; gluconeogenesis. It functions in the pathway carbohydrate degradation; glycolysis; D-glyceraldehyde 3-phosphate and glycerone phosphate from D-glucose: step 2/4. Catalyzes the reversible isomerization of glucose-6-phosphate to fructose-6-phosphate. This Salmonella choleraesuis (strain SC-B67) protein is Glucose-6-phosphate isomerase.